The following is a 426-amino-acid chain: Glutamate-1-semialdehyde 2,1-aminomutase (426 aa).

N6-(pyridoxal phosphate)lysine is present on Lys265.

Belongs to the class-III pyridoxal-phosphate-dependent aminotransferase family. HemL subfamily. Homodimer. It depends on pyridoxal 5'-phosphate as a cofactor.

The protein resides in the cytoplasm. The enzyme catalyses (S)-4-amino-5-oxopentanoate = 5-aminolevulinate. The protein operates within porphyrin-containing compound metabolism; protoporphyrin-IX biosynthesis; 5-aminolevulinate from L-glutamyl-tRNA(Glu): step 2/2. In Salmonella newport (strain SL254), this protein is Glutamate-1-semialdehyde 2,1-aminomutase.